A 162-amino-acid polypeptide reads, in one-letter code: Endoribonuclease YbeY (162 aa).

Zn(2+) is bound by residues histidine 117, histidine 121, and histidine 127.

It belongs to the endoribonuclease YbeY family. It depends on Zn(2+) as a cofactor.

It is found in the cytoplasm. Single strand-specific metallo-endoribonuclease involved in late-stage 70S ribosome quality control and in maturation of the 3' terminus of the 16S rRNA. This is Endoribonuclease YbeY from Francisella tularensis subsp. tularensis (strain WY96-3418).